A 222-amino-acid chain; its full sequence is Ribosomal RNA small subunit methyltransferase I (222 aa).

Belongs to the methyltransferase superfamily. RsmI family.

The protein localises to the cytoplasm. It carries out the reaction cytidine(1402) in 16S rRNA + S-adenosyl-L-methionine = 2'-O-methylcytidine(1402) in 16S rRNA + S-adenosyl-L-homocysteine + H(+). Catalyzes the 2'-O-methylation of the ribose of cytidine 1402 (C1402) in 16S rRNA. This chain is Ribosomal RNA small subunit methyltransferase I, found in Thermotoga maritima (strain ATCC 43589 / DSM 3109 / JCM 10099 / NBRC 100826 / MSB8).